The sequence spans 376 residues: Rhodopsin (376 aa).

At 1-51 (MSLINEPSYSAYSWGGQGGYGNQTVVDKVLPEMLHLIDPHWYQFPPMNPLW) the chain is on the extracellular side. An N-linked (GlcNAc...) asparagine glycan is attached at Asn-22. A helical membrane pass occupies residues 52–76 (HGLLGFVIGCLGFVSVVGNGMVIYI). The Cytoplasmic segment spans residues 77 to 88 (FSTTKGLRTPSN). A helical membrane pass occupies residues 89 to 113 (LLVVNLAFSDFLMMLSMSPPMVINC). Residues 114-128 (YYETWVLGPFMCELY) lie on the Extracellular side of the membrane. Cys-125 and Cys-202 form a disulfide bridge. A helical membrane pass occupies residues 129 to 148 (ALLGSLFGCGSIWTMVMIAL). Topologically, residues 149 to 167 (DRYNVIVKGLAAKPMTNKT) are cytoplasmic. Residues 168-191 (AMLRILGIWAMSIAWTVFPLFGWN) traverse the membrane as a helical segment. The Extracellular segment spans residues 192 to 215 (RYVPEGNMTACGTDYLNKEWVSRS). The N-linked (GlcNAc...) asparagine glycan is linked to Asn-198. Residues 216-243 (YILVYSVFVYFLPLATIIYSYWFIVQAV) form a helical membrane-spanning segment. Residues 244 to 278 (SAHEKQMREQAKKMNVASLRSAENANTSAECKLAK) are Cytoplasmic-facing. Residues 279–302 (VALMTISLWFFAWTPYLVTDFSGI) traverse the membrane as a helical segment. The Extracellular portion of the chain corresponds to 303–309 (FEWGKIS). Residues 310 to 334 (PLATIWCSLFAKANAVYNPIVYGIS) form a helical membrane-spanning segment. Position 321 is an N6-(retinylidene)lysine (Lys-321). Residues 335-376 (HPKYRAALNKKFPSLACASEPDDTASQASGATTVSDEKSASA) lie on the Cytoplasmic side of the membrane. The interval 353 to 376 (SEPDDTASQASGATTVSDEKSASA) is disordered. Positions 358–368 (TASQASGATTV) are enriched in polar residues.

Belongs to the G-protein coupled receptor 1 family. Opsin subfamily. Phosphorylated on some or all of the serine and threonine residues present in the C-terminal region.

It localises to the membrane. Functionally, visual pigments are the light-absorbing molecules that mediate vision. They consist of an apoprotein, opsin, covalently linked to cis-retinal. The chain is Rhodopsin from Sphodromantis sp. (Mantis).